The sequence spans 116 residues: Flagellar transcriptional regulator FlhD (116 aa).

It belongs to the FlhD family. In terms of assembly, homodimer; disulfide-linked. Forms a heterohexamer composed of two FlhC and four FlhD subunits. Each FlhC binds a FlhD dimer, forming a heterotrimer, and a hexamer assembles by dimerization of two heterotrimers.

It is found in the cytoplasm. Functionally, functions in complex with FlhC as a master transcriptional regulator that regulates transcription of several flagellar and non-flagellar operons by binding to their promoter region. Activates expression of class 2 flagellar genes, including fliA, which is a flagellum-specific sigma factor that turns on the class 3 genes. Also regulates genes whose products function in a variety of physiological pathways. This Pantoea ananatis (strain LMG 20103) protein is Flagellar transcriptional regulator FlhD.